A 131-amino-acid polypeptide reads, in one-letter code: Large ribosomal subunit protein bL19 (131 aa).

It belongs to the bacterial ribosomal protein bL19 family.

Its function is as follows. This protein is located at the 30S-50S ribosomal subunit interface and may play a role in the structure and function of the aminoacyl-tRNA binding site. The protein is Large ribosomal subunit protein bL19 of Anaeromyxobacter sp. (strain K).